A 42-amino-acid chain; its full sequence is Large ribosomal subunit protein eL32 (42 aa).

It belongs to the eukaryotic ribosomal protein eL32 family.

This Zea mays (Maize) protein is Large ribosomal subunit protein eL32 (RPL32).